The sequence spans 147 residues: Hemoglobin subunit beta-M (147 aa).

Val2 carries the post-translational modification N-acetylvaline. Positions 3–147 constitute a Globin domain; it reads HLTSEEKNCI…VAHALAHKYH (145 aa). The residue at position 13 (Thr13) is a Phosphothreonine. Ser45 is modified (phosphoserine). Lys60 carries the N6-acetyllysine modification. His64 contributes to the heme b binding site. Residue Lys83 is modified to N6-acetyllysine. His93 is a binding site for heme b. Cys94 is modified (S-nitrosocysteine). The residue at position 145 (Lys145) is an N6-acetyllysine.

Belongs to the globin family. In terms of assembly, heterotetramer of two alpha chains and two beta chains. In terms of tissue distribution, red blood cells.

Its function is as follows. Involved in oxygen transport from the lung to the various peripheral tissues. This Didelphis virginiana (North American opossum) protein is Hemoglobin subunit beta-M (HBB).